Consider the following 182-residue polypeptide: MADHLMLAEGYCLLQVPPHTHGPHAPRTLQPYAGPGMDSGLRPRGAPLGPPPPPGTLAYGSFGSPVSFQPFPVSQSPGAGSTHLQSAATPSPGRIPAPPAAAGGPSPLQPAPGAAASLPPPPPPPALGCMDTELIDEEALTSLELELGLHRVRELPELFLGQSEFDCFSDLGSAPAAGSVSC.

The segment at 22-129 is disordered; that stretch reads GPHAPRTLQP…PPPPPPALGC (108 aa). The span at 64–89 shows a compositional bias: polar residues; sequence SPVSFQPFPVSQSPGAGSTHLQSAAT. Positions 100–117 are enriched in low complexity; the sequence is AAAGGPSPLQPAPGAAAS.

Belongs to the CITED family. In terms of assembly, interacts via its C-terminal region with the CH1 domain of CREBBP and EP300. Interacts with all TFAP2/AP-2 isoforms. Strongly expressed in heart, spleen and testis, and weakly in liver and kidney.

The protein localises to the nucleus. The protein resides in the cytoplasm. Functionally, acts as a transcriptional coactivator for TFAP2/AP-2. Enhances estrogen-dependent transactivation mediated by estrogen receptors. May function as an inhibitor of transactivation by HIF1A by disrupting HIF1A interaction with CREBBP. May be involved in regulation of gene expression during development and differentiation of blood cells, endothelial cells and mammary epithelial cells. The polypeptide is Cbp/p300-interacting transactivator 4 (Mus musculus (Mouse)).